The following is a 490-amino-acid chain: Polyamine oxidase 2 (490 aa).

4 residues coordinate FAD: E57, R65, V246, and E433. A Microbody targeting signal motif is present at residues 488 to 490; sequence SRL.

Belongs to the flavin monoamine oxidase family. FAD is required as a cofactor. In terms of tissue distribution, highly expressed in flowers and siliques. Also found in leaf and stem and in low levels in cotyledons, roots and in seedlings.

The protein resides in the peroxisome. The enzyme catalyses spermine + O2 + H2O = 3-aminopropanal + spermidine + H2O2. It catalyses the reaction N(1)-acetylspermine + O2 + H2O = 3-acetamidopropanal + spermidine + H2O2. The catalysed reaction is spermidine + O2 + H2O = 3-aminopropanal + putrescine + H2O2. It participates in amine and polyamine degradation; spermine degradation. It functions in the pathway amine and polyamine degradation; spermidine degradation. In terms of biological role, flavoenzyme involved in polyamine back-conversion. Catalyzes the oxidation of the secondary amino group of polyamines, such as spermine, spermidine and their acetyl derivatives. Substrate preference is N(1)-acetylspermine &gt; spermine &gt; spermidine. Plays an important role in the regulation of polyamine intracellular concentration. Involved in abscisic acid-mediated developmental processes. May contribute to nitric oxide-mediated effects on root growth. This chain is Polyamine oxidase 2, found in Arabidopsis thaliana (Mouse-ear cress).